The sequence spans 391 residues: Succinate--CoA ligase [ADP-forming] subunit beta (391 aa).

In terms of domain architecture, ATP-grasp spans 9-247 (KDILAKYGVA…IAEEDPLEVE (239 aa)). Residues lysine 49, 56–58 (GRG), glutamate 102, alanine 105, and glutamate 110 contribute to the ATP site. Residues asparagine 202 and aspartate 216 each contribute to the Mg(2+) site. Substrate contacts are provided by residues asparagine 267 and 324 to 326 (GIL).

It belongs to the succinate/malate CoA ligase beta subunit family. In terms of assembly, heterotetramer of two alpha and two beta subunits. The cofactor is Mg(2+).

It carries out the reaction succinate + ATP + CoA = succinyl-CoA + ADP + phosphate. The catalysed reaction is GTP + succinate + CoA = succinyl-CoA + GDP + phosphate. It participates in carbohydrate metabolism; tricarboxylic acid cycle; succinate from succinyl-CoA (ligase route): step 1/1. Functionally, succinyl-CoA synthetase functions in the citric acid cycle (TCA), coupling the hydrolysis of succinyl-CoA to the synthesis of either ATP or GTP and thus represents the only step of substrate-level phosphorylation in the TCA. The beta subunit provides nucleotide specificity of the enzyme and binds the substrate succinate, while the binding sites for coenzyme A and phosphate are found in the alpha subunit. The polypeptide is Succinate--CoA ligase [ADP-forming] subunit beta (Acidobacterium capsulatum (strain ATCC 51196 / DSM 11244 / BCRC 80197 / JCM 7670 / NBRC 15755 / NCIMB 13165 / 161)).